A 294-amino-acid polypeptide reads, in one-letter code: Protein farnesyltransferase/geranylgeranyltransferase type-1 subunit alpha (294 aa).

PFTA repeat units lie at residues Tyr-57–Ser-91, Tyr-92–Lys-125, Asn-126–Asp-160, Tyr-161–Lys-194, and Ser-199–Pro-233.

Belongs to the protein prenyltransferase subunit alpha family. Heterodimer of an alpha(cwp1) and a beta(cpp1 or cwg2) subunit. The cofactor is Mg(2+).

It carries out the reaction L-cysteinyl-[protein] + (2E,6E)-farnesyl diphosphate = S-(2E,6E)-farnesyl-L-cysteinyl-[protein] + diphosphate. The catalysed reaction is geranylgeranyl diphosphate + L-cysteinyl-[protein] = S-geranylgeranyl-L-cysteinyl-[protein] + diphosphate. Catalyzes the transfer of a farnesyl or geranyl-geranyl moiety from farnesyl or geranyl-geranyl diphosphate to a cysteine at the fourth position from the C-terminus of several proteins having the C-terminal sequence Cys-aliphatic-aliphatic-X. The alpha(cwp1) subunit is thought to participate in a stable complex with the substrate. The beta(cpp1 or cwg2) subunits bind the peptide substrate. This Schizosaccharomyces pombe (strain 972 / ATCC 24843) (Fission yeast) protein is Protein farnesyltransferase/geranylgeranyltransferase type-1 subunit alpha (cwp1).